Reading from the N-terminus, the 652-residue chain is Acetyl-coenzyme A synthetase (652 aa).

CoA is bound by residues 189–192 (RGGK), Thr311, and Asn335. ATP-binding positions include 387–389 (GEP), 411–416 (DTWWQT), Asp500, and Arg515. Ser523 is a binding site for CoA. An ATP-binding site is contributed by Arg526. The Mg(2+) site is built by Val537, His539, and Val542. Residue Arg584 participates in CoA binding. Lys609 is subject to N6-acetyllysine.

Belongs to the ATP-dependent AMP-binding enzyme family. Mg(2+) serves as cofactor. In terms of processing, acetylated. Deacetylation by the SIR2-homolog deacetylase activates the enzyme.

It catalyses the reaction acetate + ATP + CoA = acetyl-CoA + AMP + diphosphate. In terms of biological role, catalyzes the conversion of acetate into acetyl-CoA (AcCoA), an essential intermediate at the junction of anabolic and catabolic pathways. AcsA undergoes a two-step reaction. In the first half reaction, AcsA combines acetate with ATP to form acetyl-adenylate (AcAMP) intermediate. In the second half reaction, it can then transfer the acetyl group from AcAMP to the sulfhydryl group of CoA, forming the product AcCoA. The sequence is that of Acetyl-coenzyme A synthetase from Rhizobium rhizogenes (strain K84 / ATCC BAA-868) (Agrobacterium radiobacter).